We begin with the raw amino-acid sequence, 208 residues long: Uracil phosphoribosyltransferase (208 aa).

5-phospho-alpha-D-ribose 1-diphosphate-binding positions include R78, R103, and 130-138; that span reads DPMLATGGS. Uracil contacts are provided by residues I193 and 198 to 200; that span reads GDA. 5-phospho-alpha-D-ribose 1-diphosphate is bound at residue D199.

Belongs to the UPRTase family. The cofactor is Mg(2+).

It catalyses the reaction UMP + diphosphate = 5-phospho-alpha-D-ribose 1-diphosphate + uracil. Its pathway is pyrimidine metabolism; UMP biosynthesis via salvage pathway; UMP from uracil: step 1/1. With respect to regulation, allosterically activated by GTP. Functionally, catalyzes the conversion of uracil and 5-phospho-alpha-D-ribose 1-diphosphate (PRPP) to UMP and diphosphate. This is Uracil phosphoribosyltransferase from Neisseria gonorrhoeae (strain ATCC 700825 / FA 1090).